The chain runs to 841 residues: Copper-transporting P-type ATPase (841 aa).

The next 6 helical transmembrane spans lie at 186–206 (LWVS…PMLG), 218–238 (ATFI…LPFF), 256–276 (IGLG…APGI), 285–305 (GAAV…VFVG), 445–465 (AVFV…WAAI), and 474–494 (GLLA…GLAT). Asp-530 (4-aspartylphosphate intermediate) is an active-site residue. The next 2 membrane-spanning stretches (helical) occupy residues 602–622 (GIAD…DLGI) and 638–658 (GKTV…AVAD). Mg(2+) is bound by residues Asp-729 and Asp-733. Transmembrane regions (helical) follow at residues 742-762 (VGIA…ITLV) and 800-820 (VAAG…IAAA).

This sequence belongs to the cation transport ATPase (P-type) (TC 3.A.3) family. Type IB subfamily.

It localises to the cell membrane. The enzyme catalyses Cu(2+)(in) + ATP + H2O = Cu(2+)(out) + ADP + phosphate + H(+). Functionally, involved in copper efflux. The polypeptide is Copper-transporting P-type ATPase (actP) (Rhizobium leguminosarum bv. viciae).